Consider the following 1304-residue polypeptide: MDNNNSNNKNNEESNNIVIPILSEKEKKHLYEFEIIRILKKDEFSTTCKAKKLSGQFNEKRVNFCIIKIIKKRVKKFDSKKNEIIIEIDPRKEREILEKIKHICVLEYYGYSEDEDNGYIYTEYIQGGIDIVETVTNKLLKEHSHSFQSEDIIRRCAFQLVLLLNHLHNNLHIIHGNINTDNVLIADQEFSLKLFDFSLSKDISYYSKDNNNNNNNNNNNNNNNNNNNNNNNNNNNNNNANNSNNNTLNNLSIVNNNSSSSSNDNSSEAEGGGGGGEASITSTISTILSGSSSSQLSTPSTSLESSFSLEINLNDSSCYLIAPEIRNQQKITSKGLSKKSDIWGLGCLLLLMVGGDPKITTNFEPTIPYHLSNNCKNFIQKCLIQDPYHRWDTNLLLTHKFIEKTSFENSCNNQNNSSTTTTTTINTYSIENEENILLINGSNGMNEFEEIPNYITTLKFQESFNMEIVNEMFTDSIVHLEFPQGFNKLDFNELPDFLSTLIYHGEFNIESNYHSKSLKPRDIPKSIIHLQLPNYNLKIRRNSIPDQTKFLILGSDLGENEIQSLINLPPSIIDLEFGCDLELILNFLTQEMIPSNITSLKINSQQIFLPFKRSNPFGLTNNIGNNNSNNGEQFNIPIDELPLSKDINDLMILETVEINNLNQLNSNKLLTLTNRVGKLIFSKEFDEPLTIGCIKSRSITSLKFNKGSRFNQLLVVGCLPVNLTSLEFGDRFNQALSVGCIPPKVTHLKFGRCFNQPLKLGVIPDSCTFIQFGSQFNQSLEPMVIPSSVKELIFGSQYNQPTIQGTFPDRIKKLVFSDDHDQFHSQDTLPKSLVHLEFGESQNFNQILFNQSSSNLIPSLTPPPPIYQKLTTFIFNGYFTVPLKVFDLPLSITHLELPQYNDILEKDCIPSFVKTLVLGSSFTIIESFINLPKSITSLSFGCDENVIGLINQSLIPPNCNTLKINGQSISLPITQTLQIFKNPILPTESSLILSQQQQQQQQQQQMDLSVEYENQNFLTTNTLNQGSWIISINNFSNRKDQFYSPIFSLIGSNWRCKFYSNGKDASTSGKLSIFISNCDLLNNPFTIFLEKSISYKLTLINQKNPNESIQKSSSHTFSIKEFNHGYGSFIGLFSLLNPNNGFLVNNTIKVRIDAAPTSPLVNTYDKYNIGLNQAFSYSVPMMSKKSEPFISPIFMSCGRKWIIKIYPMGQPSSNYMSVFLEYRDEGEENVHFSLELISQLYPEQSIKYWVQYRFNSKSNSFGYPKFIGVSTLMDPDMGFLVNDTIILNVSILQLKPIKKSFGFL.

A Protein kinase domain is found at 33–402 (FEIIRILKKD…TNLLLTHKFI (370 aa)). ATP is bound by residues 39-47 (LKKDEFSTT) and K68. The interval 208–277 (KDNNNNNNNN…EAEGGGGGGE (70 aa)) is disordered. Residues 210 to 269 (NNNNNNNNNNNNNNNNNNNNNNNNNNNNNNANNSNNNTLNNLSIVNNNSSSSSNDNSSEA) are compositionally biased toward low complexity. 5 FNIP repeats span residues 514–556 (HSKS…LGSD), 710–753 (FNQL…FGRC), 754–797 (FNQP…FGSQ), 798–841 (YNQP…FGES), and 900–943 (YNDI…FGCD). MATH domains are found at residues 1025 to 1154 (QGSW…RIDA) and 1172 to 1291 (NQAF…NVSI).

This sequence belongs to the protein kinase superfamily. STE Ser/Thr protein kinase family.

The sequence is that of Probable inactive serine/threonine-protein kinase fnkC (fnkC) from Dictyostelium discoideum (Social amoeba).